The sequence spans 449 residues: Clusterin (449 aa).

Positions 1–21 (MKTLLLLVGLLLTLENGQVLG) are cleaved as a signal peptide. Residues 77-80 (KKKK) carry the Nuclear localization signal motif. N-linked (GlcNAc...) asparagine glycans are attached at residues N85 and N102. Intrachain disulfides connect C101–C313, C112–C305, C115–C302, C120–C295, and C128–C285. S132 bears the Phosphoserine mark. N-linked (GlcNAc...) asparagine glycosylation is found at N144, N291, N328, N354, and N374. Position 396 is a phosphoserine (S396). The Nuclear localization signal signature appears at 443–447 (RQKNR).

Belongs to the clusterin family. Antiparallel disulfide-linked heterodimer of an alpha chain and a beta chain. Self-associates and forms higher oligomers. Interacts with a broad range of misfolded proteins, including APP, APOC2 and LYZ. Slightly acidic pH promotes interaction with misfolded proteins. Forms high-molecular weight oligomers upon interaction with misfolded proteins. Interacts with APOA1, LRP2, CLUAP1 and PON1. Interacts with the complement membrane attack complex. Interacts (via alpha chain) with XRCC6. Interacts with SYVN1, COMMD1, BTRC, CUL1 and with ubiquitin and SCF (SKP1-CUL1-F-box protein) E3 ubiquitin-protein ligase complexes. Interacts (via alpha chain) with BAX in stressed cells, where BAX undergoes a conformation change leading to association with the mitochondrial membrane. Does not interact with BAX in unstressed cells. Found in a complex with LTF, CLU, EPPIN and SEMG1. Interacts (immaturely glycosylated pre-secreted form) with HSPA5; this interaction promotes CLU stability and facilitates stress-induced CLU retrotranslocation from the secretory pathway to the mitochondria, thereby reducing stress-induced apoptosis by stabilizing mitochondrial membrane integrity. Interacts with BCL2L1; this interaction releases and activates BAX and promotes cell death. Interacts with TGFBR2 and ACVR1. Interacts (secreted form) with STMN3; this interaction may act as an important modulator during neuronal differentiation. Interacts with VLDLR and LRP8. Post-translationally, proteolytically cleaved on its way through the secretory system, probably within the Golgi lumen. Proteolytic cleavage is not necessary for its chaperone activity. All non-secreted forms are not proteolytically cleaved. Chaperone activity of uncleaved forms is dependent on a non-reducing environment. In terms of processing, polyubiquitinated, leading to proteasomal degradation. Under cellular stress, the intracellular level of cleaved form is reduced due to proteasomal degradation. Heavily N-glycosylated. About 30% of the protein mass is comprised of complex N-linked carbohydrate. Endoplasmic reticulum (ER) stress induces changes in glycosylation status and increases level of hypoglycosylated forms. Core carbohydrates are essential for chaperone activity. Non-secreted forms are hypoglycosylated or unglycosylated.

Its subcellular location is the secreted. It is found in the nucleus. The protein localises to the cytoplasm. The protein resides in the mitochondrion membrane. It localises to the cytosol. Its subcellular location is the microsome. It is found in the endoplasmic reticulum. The protein localises to the mitochondrion. The protein resides in the perinuclear region. It localises to the cytoplasmic vesicle. Its subcellular location is the secretory vesicle. It is found in the chromaffin granule. Functions as extracellular chaperone that prevents aggregation of non native proteins. Prevents stress-induced aggregation of blood plasma proteins. Inhibits formation of amyloid fibrils by APP, APOC2, B2M, CALCA, CSN3, SNCA and aggregation-prone LYZ variants (in vitro). Does not require ATP. Maintains partially unfolded proteins in a state appropriate for subsequent refolding by other chaperones, such as HSPA8/HSC70. Does not refold proteins by itself. Binding to cell surface receptors triggers internalization of the chaperone-client complex and subsequent lysosomal or proteasomal degradation. When secreted, protects cells against apoptosis and against cytolysis by complement: inhibits assembly of the complement membrane attack complex (MAC) by preventing polymerization of C9 pore component of the MAC complex. Intracellular forms interact with ubiquitin and SCF (SKP1-CUL1-F-box protein) E3 ubiquitin-protein ligase complexes and promote the ubiquitination and subsequent proteasomal degradation of target proteins. Promotes proteasomal degradation of COMMD1 and IKBKB. Modulates NF-kappa-B transcriptional activity. Following stress, promotes apoptosis. Inhibits apoptosis when associated with the mitochondrial membrane by interference with BAX-dependent release of cytochrome c into the cytoplasm. Plays a role in the regulation of cell proliferation. An intracellular form suppresses stress-induced apoptosis by stabilizing mitochondrial membrane integrity through interaction with HSPA5. Secreted form does not affect caspase or BAX-mediated intrinsic apoptosis and TNF-induced NF-kappa-B-activity. Secreted form act as an important modulator during neuronal differentiation through interaction with STMN3. Plays a role in the clearance of immune complexes that arise during cell injury. This chain is Clusterin (CLU), found in Equus caballus (Horse).